A 587-amino-acid polypeptide reads, in one-letter code: Large T antigen (587 aa).

In terms of domain architecture, J spans 6–82 (RLTELLCLPV…PEESGYATFE (77 aa)). The tract at residues 58-78 (EGLRADETLEDSDPEPEESGY) is disordered. Positions 65 to 75 (TLEDSDPEPEE) are enriched in acidic residues. Positions 102–219 (CMQTYFSVNE…EECSIDMNVV (118 aa)) form a DNA-binding region, T-ag OBD. A T-ag D1-type zinc finger spans residues 221 to 319 (EKQFMHAMLY…KRFRSATMTR (99 aa)). Zn(2+) is bound by residues Cys258, Cys261, His275, and His279. Residues 360-520 (PDVDVIVDIL…KVYAKALRNN (161 aa)) form the SF3 helicase domain. An ATP-binding site is contributed by 386-393 (GPVNTGKT).

Forms homohexamers in the presence of ATP. Interacts with host HDAC1. Interacts (via LXCXE domain) with host RB1; the interaction induces the aberrant dissociation of RB1-E2F1 complex thereby disrupting RB1's activity. Interacts (via LXCXE domain) with host pRB-related proteins RBL1 and RBL2. Interacts (via C-terminus) with host TOP1 and POLA1 allowing DNA replication. Interacts with host TP53, inhibiting TP53 binding to DNA. Interacts with host preinitiation complex components TBP, TFIIA and TFIID to regulate transcription initiation. Mg(2+) serves as cofactor. In terms of processing, phosphorylated on both serine and threonine residues. Small t antigen inhibits the dephosphorylation by the AC form of PP2A. Post-translationally, O-Glycosylated near the C-terminal region. Acetylated by CBP in a TP53-dependent manner.

Its subcellular location is the host nucleus. The catalysed reaction is Couples ATP hydrolysis with the unwinding of duplex DNA by translocating in the 3'-5' direction.. It carries out the reaction ATP + H2O = ADP + phosphate + H(+). Isoform large T antigen is a key early protein essential for both driving viral replication and inducing cellular transformation. Plays a role in viral genome replication by driving entry of quiescent cells into the cell cycle and by autoregulating the synthesis of viral early mRNA. Displays highly oncogenic activities by corrupting the host cellular checkpoint mechanisms that guard cell division and the transcription, replication, and repair of DNA. Participates in the modulation of cellular gene expression preceeding viral DNA replication. This step involves binding to host key cell cycle regulators retinoblastoma protein RB1/pRb and TP53. Induces the disassembly of host E2F1 transcription factors from RB1, thus promoting transcriptional activation of E2F1-regulated S-phase genes. Inhibits host TP53 binding to DNA, abrogating the ability of TP53 to stimulate gene expression. Plays the role of a TFIID-associated factor (TAF) in transcription initiation for all three RNA polymerases, by stabilizing the TBP-TFIIA complex on promoters. Initiates viral DNA replication and unwinding via interactions with the viral origin of replication. Binds two adjacent sites in the SV40 origin. The replication fork movement is facilitated by Large T antigen helicase activity. Has processive 3'-5' DNA helicase activity which requires a short 3' single-stranded region and ATP. Activates the transcription of viral late mRNA, through host TBP and TFIIA stabilization. Interferes with histone deacetylation mediated by HDAC1, leading to activation of transcription. The sequence is that of Large T antigen from Budgerigar fledgling disease virus (BFPyV).